A 434-amino-acid polypeptide reads, in one-letter code: Tubulin gamma chain (434 aa).

135–141 (AGGTGSG) is a GTP binding site.

Belongs to the tubulin family.

Its subcellular location is the cytoplasm. It localises to the cytoskeleton. It is found in the microtubule organizing center. The protein resides in the spindle pole body. Tubulin is the major constituent of microtubules. The gamma chain is found at microtubule organizing centers (MTOC) such as the spindle poles or the centrosome, suggesting that it is involved in the minus-end nucleation of microtubule assembly. In Encephalitozoon cuniculi (strain GB-M1) (Microsporidian parasite), this protein is Tubulin gamma chain (TUB4).